The chain runs to 706 residues: MGRKVTVATCALNQWALDFEGNLQRILKSIEIAKNRGARYRLGPELEICGYGCWDHYYESDTLLHSFQVLAALLESPVTQDIICDVGMPVMHRNVRYNCRVIFLSRKILLIRPKMALANEGNYRELRWFTPWSRSRHTEEYLLPRMIQDLTKQETAPFGDAVLATWDTCIGSEICEELWTPHSPHIDMGLDGVEIITNASGSHHVLRKANTRVDLVTMATSKNGGIYLLANQKGCDGDRLYYDGCAMIAMNGSVFAQGSQFSLDDVEVLTATLDLEDVRSYRAEISSRNLAASRASPYPRVKVDFALSCHEDLLAPVSEPIEWKYHSPEEEISLGPACWLWDFLRRSQQGGFLLPLSGGVDSAATACLVYSMCCQVCKSVRSGNQEVLADVRTIVNQISYTPQDPRDLCGHILTTCYMASKNSSQETCTRARELAQQIGSHHISLNIDPAVKAVTGIFSLVTGKSPLFAAHGGSSRENLALQNVQARIRMVLAYLFAQLSLWSRGIRGGLLVLGSANVDESLLGYLTKYDCSSADINPIGGISKTDLRAFVQFCIERFQLTALQSIISAPVTAELEPLADGQVSQTDEEDMGMTYAELSVYGKLRKVAKMGPYSMFCKLLGMWRHVCTPRQVADKVKWFFTKHSMNRHKMTTLTPAYHAENYSPEDNRFDLRPFLYNTSWPWQFRCIENQVLQLERAAPQSLDGVD.

Residues 5–275 (VTVATCALNQ…VEVLTATLDL (271 aa)) form the CN hydrolase domain. Glu-45 serves as the catalytic Proton acceptor; for glutaminase activity. Lys-114 (for glutaminase activity) is an active-site residue. Cys-175 acts as the Nucleophile; for glutaminase activity in catalysis. The segment at 325–706 (YHSPEEEISL…AAPQSLDGVD (382 aa)) is ligase. Position 355 to 362 (355 to 362 (PLSGGVDS)) interacts with ATP. Ser-357 is a catalytic residue.

It in the C-terminal section; belongs to the NAD synthetase family. As to quaternary structure, homohexamer.

The catalysed reaction is deamido-NAD(+) + L-glutamine + ATP + H2O = L-glutamate + AMP + diphosphate + NAD(+) + H(+). It functions in the pathway cofactor biosynthesis; NAD(+) biosynthesis; NAD(+) from deamido-NAD(+) (L-Gln route): step 1/1. Catalyzes the final step of the nicotinamide adenine dinucleotide (NAD) de novo synthesis pathway, the ATP-dependent amidation of deamido-NAD using L-glutamine as a nitrogen source. The protein is Glutamine-dependent NAD(+) synthetase (NADSYN1) of Macaca fascicularis (Crab-eating macaque).